A 182-amino-acid polypeptide reads, in one-letter code: HGPRTase-like protein 1 (182 aa).

Belongs to the purine/pyrimidine phosphoribosyltransferase family. Archaeal HPRT subfamily.

In terms of biological role, may catalyze a purine salvage reaction, the substrate is unknown. This chain is HGPRTase-like protein 1, found in Haloarcula marismortui (strain ATCC 43049 / DSM 3752 / JCM 8966 / VKM B-1809) (Halobacterium marismortui).